Reading from the N-terminus, the 221-residue chain is Deoxyribose-phosphate aldolase (221 aa).

The active-site Proton donor/acceptor is the Asp-91. The active-site Schiff-base intermediate with acetaldehyde is Lys-153. Lys-182 serves as the catalytic Proton donor/acceptor.

The protein belongs to the DeoC/FbaB aldolase family. DeoC type 1 subfamily.

It is found in the cytoplasm. The catalysed reaction is 2-deoxy-D-ribose 5-phosphate = D-glyceraldehyde 3-phosphate + acetaldehyde. It participates in carbohydrate degradation; 2-deoxy-D-ribose 1-phosphate degradation; D-glyceraldehyde 3-phosphate and acetaldehyde from 2-deoxy-alpha-D-ribose 1-phosphate: step 2/2. In terms of biological role, catalyzes a reversible aldol reaction between acetaldehyde and D-glyceraldehyde 3-phosphate to generate 2-deoxy-D-ribose 5-phosphate. The sequence is that of Deoxyribose-phosphate aldolase from Clostridium botulinum (strain Eklund 17B / Type B).